The chain runs to 868 residues: Leucine--tRNA ligase (868 aa).

Positions 42 to 52 (PYPSGKLHMGH) match the 'HIGH' region motif. Positions 627-631 (KMSKS) match the 'KMSKS' region motif. Lysine 630 lines the ATP pocket.

It belongs to the class-I aminoacyl-tRNA synthetase family.

The protein localises to the cytoplasm. The enzyme catalyses tRNA(Leu) + L-leucine + ATP = L-leucyl-tRNA(Leu) + AMP + diphosphate. The protein is Leucine--tRNA ligase of Pseudomonas syringae pv. tomato (strain ATCC BAA-871 / DC3000).